A 232-amino-acid polypeptide reads, in one-letter code: Ribosome maturation protein SDO1 homolog (232 aa).

This sequence belongs to the SDO1/SBDS family.

The sequence is that of Ribosome maturation protein SDO1 homolog from Methanothermobacter thermautotrophicus (strain ATCC 29096 / DSM 1053 / JCM 10044 / NBRC 100330 / Delta H) (Methanobacterium thermoautotrophicum).